The chain runs to 379 residues: Tryptophan 2,3-dioxygenase (379 aa).

Residues 57–61 (FIITH) and Arg-128 each bind substrate. His-312 provides a ligand contact to heme. Position 327 (Thr-327) interacts with substrate.

This sequence belongs to the tryptophan 2,3-dioxygenase family. Homotetramer. Dimer of dimers. Heme serves as cofactor.

It catalyses the reaction L-tryptophan + O2 = N-formyl-L-kynurenine. It functions in the pathway amino-acid degradation; L-tryptophan degradation via kynurenine pathway; L-kynurenine from L-tryptophan: step 1/2. Its pathway is pigment biosynthesis; ommochrome biosynthesis. Functionally, heme-dependent dioxygenase that catalyzes the oxidative cleavage of the L-tryptophan (L-Trp) pyrrole ring and converts L-tryptophan to N-formyl-L-kynurenine. Catalyzes the oxidative cleavage of the indole moiety. The chain is Tryptophan 2,3-dioxygenase from Drosophila sechellia (Fruit fly).